Reading from the N-terminus, the 254-residue chain is Cytochrome c oxidase subunit 2 (254 aa).

Over 1 to 37 (MNNILNFYPAVITTDVAENWQIGFQDPATPIMEGIIN) the chain is Mitochondrial intermembrane. The chain crosses the membrane as a helical span at residues 38–58 (LHYDLMFFICVISVFVSWMLG). The Mitochondrial matrix portion of the chain corresponds to 59 to 83 (RTLWHFEQNQNKIPSSLTHGTLIEM). Residues 84–104 (IWTVTPAFILLIIAVPSFSLL) form a helical membrane-spanning segment. Over 105-254 (YAMDEIISPA…VSWISNKLNE (150 aa)) the chain is Mitochondrial intermembrane. Cu cation-binding residues include His-186, Cys-221, Glu-223, Cys-225, His-229, and Met-232. A Mg(2+)-binding site is contributed by Glu-223.

It belongs to the cytochrome c oxidase subunit 2 family. Component of the cytochrome c oxidase (complex IV, CIV), a multisubunit enzyme composed of a catalytic core of 3 subunits and several supernumerary subunits. The complex exists as a monomer or a dimer and forms supercomplexes (SCs) in the inner mitochondrial membrane with ubiquinol-cytochrome c oxidoreductase (cytochrome b-c1 complex, complex III, CIII). Cu cation serves as cofactor.

Its subcellular location is the mitochondrion inner membrane. The catalysed reaction is 4 Fe(II)-[cytochrome c] + O2 + 8 H(+)(in) = 4 Fe(III)-[cytochrome c] + 2 H2O + 4 H(+)(out). In terms of biological role, component of the cytochrome c oxidase, the last enzyme in the mitochondrial electron transport chain which drives oxidative phosphorylation. The respiratory chain contains 3 multisubunit complexes succinate dehydrogenase (complex II, CII), ubiquinol-cytochrome c oxidoreductase (cytochrome b-c1 complex, complex III, CIII) and cytochrome c oxidase (complex IV, CIV), that cooperate to transfer electrons derived from NADH and succinate to molecular oxygen, creating an electrochemical gradient over the inner membrane that drives transmembrane transport and the ATP synthase. Cytochrome c oxidase is the component of the respiratory chain that catalyzes the reduction of oxygen to water. Electrons originating from reduced cytochrome c in the intermembrane space (IMS) are transferred via the dinuclear copper A center (CU(A)) of subunit 2 and heme A of subunit 1 to the active site in subunit 1, a binuclear center (BNC) formed by heme A3 and copper B (CU(B)). The BNC reduces molecular oxygen to 2 water molecules using 4 electrons from cytochrome c in the IMS and 4 protons from the mitochondrial matrix. The protein is Cytochrome c oxidase subunit 2 (COX2) of Chondrus crispus (Carrageen Irish moss).